Consider the following 236-residue polypeptide: Small ribosomal subunit protein uS2c (236 aa).

The protein belongs to the universal ribosomal protein uS2 family.

The protein resides in the plastid. It is found in the chloroplast. The sequence is that of Small ribosomal subunit protein uS2c (rps2) from Agrostis stolonifera (Creeping bentgrass).